The sequence spans 354 residues: L-Lys-D/L-Arg epimerase (354 aa).

Substrate-binding positions include T135 and 160–162 (KIK). Residues D190, E215, and D240 each coordinate Mg(2+). Residues K265, D295, and 318–320 (DLD) each bind substrate.

The protein belongs to the mandelate racemase/muconate lactonizing enzyme family. Mg(2+) is required as a cofactor.

Its function is as follows. Catalyzes the epimerization of L-Lys-L-Arg to L-Lys-D-Arg (in vitro). Catalyzes the epimerization of positively charged dipeptides, with a preference for substrates with a basic amino acid in the second position. Has epimerase activity with L-Lys-L-Lys, L-Arg-L-Arg, L-Val-L-Arg, L-Val-L-Lys and L-Ala-L-Arg (in vitro). This is L-Lys-D/L-Arg epimerase from Desulforapulum autotrophicum (strain ATCC 43914 / DSM 3382 / VKM B-1955 / HRM2) (Desulfobacterium autotrophicum).